We begin with the raw amino-acid sequence, 103 residues long: ATP-dependent Clp protease adapter protein ClpS (103 aa).

It belongs to the ClpS family. Binds to the N-terminal domain of the chaperone ClpA.

Its function is as follows. Involved in the modulation of the specificity of the ClpAP-mediated ATP-dependent protein degradation. The protein is ATP-dependent Clp protease adapter protein ClpS of Nitrosomonas eutropha (strain DSM 101675 / C91 / Nm57).